Consider the following 399-residue polypeptide: L-2-hydroxyglutarate dehydrogenase (399 aa).

It belongs to the L2HGDH family. It depends on FAD as a cofactor.

The catalysed reaction is (S)-2-hydroxyglutarate + A = 2-oxoglutarate + AH2. Its function is as follows. Catalyzes the dehydrogenation of L-2-hydroxyglutarate (L2HG or(S)-2-hydroxyglutarate) to 2-oxoglutarate (alpha-ketoglutarate). Active in vitro with the artificial electron acceptor 2,6-dichlorophenolindophenol (DCPIP). Also displays a very low oxidase activity in vitro on L-2-hydroxyglutarate with O2 as the electron acceptor, but this activity is most likely not physiological. The chain is L-2-hydroxyglutarate dehydrogenase from Indibacter alkaliphilus (strain CCUG 57479 / KCTC 22604 / LW1).